Reading from the N-terminus, the 470-residue chain is Chromosomal replication initiator protein DnaA (470 aa).

Residues 1 to 79 are domain I, interacts with DnaA modulators; the sequence is MTDDTWGLLR…AVQRLAFKVA (79 aa). A domain II region spans residues 79–128; that stretch reads AANSPTRPVQPTMSEAIEEPAPLQTTVVDQLGNQEGNTSVKSPPEDLQAA. The interval 129-350 is domain III, AAA+ region; it reads PLDPRFTFDS…GALTRLFAFA (222 aa). ATP is bound by residues G173, G175, K176, and T177. A domain IV, binds dsDNA region spans residues 351 to 470; that stretch reads SLVGREIDMD…VEMLRRSLEA (120 aa).

Belongs to the DnaA family. Oligomerizes as a right-handed, spiral filament on DNA at oriC.

It is found in the cytoplasm. Plays an essential role in the initiation and regulation of chromosomal replication. ATP-DnaA binds to the origin of replication (oriC) to initiate formation of the DNA replication initiation complex once per cell cycle. Binds the DnaA box (a 9 base pair repeat at the origin) and separates the double-stranded (ds)DNA. Forms a right-handed helical filament on oriC DNA; dsDNA binds to the exterior of the filament while single-stranded (ss)DNA is stabiized in the filament's interior. The ATP-DnaA-oriC complex binds and stabilizes one strand of the AT-rich DNA unwinding element (DUE), permitting loading of DNA polymerase. After initiation quickly degrades to an ADP-DnaA complex that is not apt for DNA replication. Binds acidic phospholipids. This Ruegeria sp. (strain TM1040) (Silicibacter sp.) protein is Chromosomal replication initiator protein DnaA.